The following is a 682-amino-acid chain: TPR repeat-containing thioredoxin TTL4 (682 aa).

Disordered stretches follow at residues 1 to 120 (MSHY…GTPL) and 132 to 157 (NNNN…TGNI). Residue serine 8 is modified to Phosphoserine. The segment covering 16–39 (KFRDSLSFQRDDDVINKPDFRELD) has biased composition (basic and acidic residues). At serine 42 the chain carries Phosphoserine. Residues 48–71 (GSSSAAATPAASGSSSSSSGSASG) show a composition bias toward low complexity. TPR repeat units lie at residues 211–244 (SEEV…SPEN), 246–278 (AYRS…DPSY), 280–312 (RAHQ…PDQA), 402–435 (AYVL…DHSN), 449–482 (VAKA…DAFN), 483–516 (SVLY…QPSY), and 518–550 (KALL…LPGD). One can recognise a Thioredoxin domain in the interval 587–674 (DKFKTATSLP…MVCPSHQLLE (88 aa)).

Widely expressed.

Functionally, involved in osmotic and salt stress tolerance. May play a role in the control of meristematic cell size during osmotic stress. In Arabidopsis thaliana (Mouse-ear cress), this protein is TPR repeat-containing thioredoxin TTL4 (TTL4).